Consider the following 481-residue polypeptide: Ribulose bisphosphate carboxylase large chain (481 aa).

A propeptide spanning residues methionine 1–serine 2 is cleaved from the precursor. Proline 3 carries the post-translational modification N-acetylproline. Lysine 14 carries the post-translational modification N6,N6,N6-trimethyllysine. Asparagine 123 and threonine 173 together coordinate substrate. The active-site Proton acceptor is lysine 175. Lysine 177 contacts substrate. Residues lysine 201, aspartate 203, and glutamate 204 each contribute to the Mg(2+) site. Lysine 201 is subject to N6-carboxylysine. Residue histidine 294 is the Proton acceptor of the active site. Substrate is bound by residues arginine 295, histidine 327, and serine 379.

Belongs to the RuBisCO large chain family. Type I subfamily. As to quaternary structure, heterohexadecamer of 8 large chains and 8 small chains; disulfide-linked. The disulfide link is formed within the large subunit homodimers. Requires Mg(2+) as cofactor. In terms of processing, the disulfide bond which can form in the large chain dimeric partners within the hexadecamer appears to be associated with oxidative stress and protein turnover.

It localises to the plastid. The enzyme catalyses 2 (2R)-3-phosphoglycerate + 2 H(+) = D-ribulose 1,5-bisphosphate + CO2 + H2O. It carries out the reaction D-ribulose 1,5-bisphosphate + O2 = 2-phosphoglycolate + (2R)-3-phosphoglycerate + 2 H(+). In terms of biological role, ruBisCO catalyzes two reactions: the carboxylation of D-ribulose 1,5-bisphosphate, the primary event in carbon dioxide fixation, as well as the oxidative fragmentation of the pentose substrate in the photorespiration process. Both reactions occur simultaneously and in competition at the same active site. The polypeptide is Ribulose bisphosphate carboxylase large chain (Cuscuta obtusiflora (Peruvian dodder)).